The sequence spans 504 residues: ATP synthase subunit alpha 1 (504 aa).

172-179 contributes to the ATP binding site; it reads GDRQTGKT.

This sequence belongs to the ATPase alpha/beta chains family. F-type ATPases have 2 components, CF(1) - the catalytic core - and CF(0) - the membrane proton channel. CF(1) has five subunits: alpha(3), beta(3), gamma(1), delta(1), epsilon(1). CF(0) has three main subunits: a(1), b(2) and c(9-12). The alpha and beta chains form an alternating ring which encloses part of the gamma chain. CF(1) is attached to CF(0) by a central stalk formed by the gamma and epsilon chains, while a peripheral stalk is formed by the delta and b chains.

It is found in the cell inner membrane. It catalyses the reaction ATP + H2O + 4 H(+)(in) = ADP + phosphate + 5 H(+)(out). Its function is as follows. Produces ATP from ADP in the presence of a proton gradient across the membrane. The alpha chain is a regulatory subunit. In Rhodopirellula baltica (strain DSM 10527 / NCIMB 13988 / SH1), this protein is ATP synthase subunit alpha 1.